The sequence spans 82 residues: DNA-directed RNA polymerase subunit Rpo5 (82 aa).

Belongs to the archaeal Rpo5/eukaryotic RPB5 RNA polymerase subunit family. In terms of assembly, part of the RNA polymerase complex.

The protein resides in the cytoplasm. It carries out the reaction RNA(n) + a ribonucleoside 5'-triphosphate = RNA(n+1) + diphosphate. Its function is as follows. DNA-dependent RNA polymerase (RNAP) catalyzes the transcription of DNA into RNA using the four ribonucleoside triphosphates as substrates. The protein is DNA-directed RNA polymerase subunit Rpo5 of Pyrococcus abyssi (strain GE5 / Orsay).